A 443-amino-acid chain; its full sequence is Glutamine synthetase (443 aa).

In terms of domain architecture, GS beta-grasp spans 16 to 101 (NGVKFIRLQF…LICDVYKPDG (86 aa)). Positions 108 to 443 (PRHVLKRANA…WELENYLNKY (336 aa)) constitute a GS catalytic domain. E131 and E133 together coordinate Mg(2+). ATP is bound at residue E183. 2 residues coordinate Mg(2+): E188 and E195. L-glutamate-binding positions include 239–240 (NG) and G240. Residue H244 participates in Mg(2+) binding. S248 provides a ligand contact to ATP. L-glutamate contacts are provided by R297, E303, and R315. Positions 315 and 320 each coordinate ATP. A Mg(2+)-binding site is contributed by E332. R334 serves as a coordination point for L-glutamate.

Belongs to the glutamine synthetase family. As to quaternary structure, oligomer of 12 subunits arranged in the form of two hexagons. In its feedback-inhibited form, interacts with TnrA in order to block its DNA-binding activity. Requires Mg(2+) as cofactor.

The protein resides in the cytoplasm. The catalysed reaction is L-glutamate + NH4(+) + ATP = L-glutamine + ADP + phosphate + H(+). With respect to regulation, inhibited by glutamine. Glutamine synthetase (GS) is an unusual multitasking protein that functions as an enzyme, a transcription coregulator, and a chaperone in ammonium assimilation and in the regulation of genes involved in nitrogen metabolism. It catalyzes the ATP-dependent biosynthesis of glutamine from glutamate and ammonia. Feedback-inhibited GlnA also interacts with and regulates the activity of the transcriptional regulator TnrA. During nitrogen limitation, TnrA is in its DNA-binding active state and turns on the transcription of genes required for nitrogen assimilation. Under conditions of nitrogen excess, feedback-inhibited GlnA forms a stable complex with TnrA, which inhibits its DNA-binding activity. In contrast, feedback-inhibited GlnA acts as a chaperone to stabilize the DNA-binding activity of GlnR, which represses the transcription of nitrogen assimilation genes. The sequence is that of Glutamine synthetase from Clostridium saccharobutylicum.